Reading from the N-terminus, the 70-residue chain is Small ribosomal subunit protein bS21 (70 aa).

Belongs to the bacterial ribosomal protein bS21 family.

This Nitrosospira multiformis (strain ATCC 25196 / NCIMB 11849 / C 71) protein is Small ribosomal subunit protein bS21.